Consider the following 450-residue polypeptide: Keratin, type I cytoskeletal 25 (450 aa).

The segment at 1–25 is disordered; it reads MSLRLPSGSRRASPRPTTGSLRLSS. Positions 1–78 are head; that stretch reads MSLRLPSGSR…VNEGGLLSGN (78 aa). The segment at 79 to 114 is coil 1A; it reads EKVTMQNLNDRLASYLENVRALEEANADLEQKIKGW. Residues 79 to 394 enclose the IF rod domain; that stretch reads EKVTMQNLND…LLIGGDDGAC (316 aa). The interval 115-136 is linker 1; the sequence is YEKFGPGSCRGLDHDYSRYFPI. The tract at residues 137–228 is coil 1B; the sequence is IEDLKNQIIA…KNHKEEMQVL (92 aa). The interval 229–251 is linker 12; it reads QCAAGGNVNVEMNAAPGVDLTVL. Residues 252–390 form a coil 2 region; it reads LNNMRAEYEA…ETYCLLIGGD (139 aa). Residues 391–450 form a tail region; sequence DGACKSGGYKSKDYGAGNVGNQMKDPVKAIVVKKVLEEVDQRSKILTPRLHSLEEKSQSN. At Ser442 the chain carries Phosphoserine.

This sequence belongs to the intermediate filament family. As to quaternary structure, heterodimer of a type I and a type II keratin. Heterodimer with type II keratin KRT5 leading to the formation of keratin intermediate filament (KIF) network. Interacts with KRT6A to form filaments.

The protein resides in the cytoplasm. Functionally, essential for the proper assembly of type I and type II keratin protein complexes and formation of keratin intermediate filaments in the inner root sheath (irs). Plays a role in the cytoskeleton organization. This chain is Keratin, type I cytoskeletal 25, found in Bos taurus (Bovine).